Here is a 746-residue protein sequence, read N- to C-terminus: MQAKKRYFILLSAGSCLALLFYFGGLQFRASRSHSRREEHSGRNGLHHPSPDHFWPRFPDALRPFVPWDQLENEDSSVHISPRQKRDANSSIYKGKKCRMESCFDFTLCKKNGFKVYVYPQQKGEKIAESYQNILAAIEGSRFYTSDPSQACLFVLSLDTLDRDQLSPQYVHNLRSKVQSLHLWNNGRNHLIFNLYSGTWPDYTEDVGFDIGQAMLAKASISTENFRPNFDVSIPLFSKDHPRTGGERGFLKFNTIPPLRKYMLVFKGKRYLTGIGSDTRNALYHVHNGEDVVLLTTCKHGKDWQKHKDSRCDRDNTEYEKYDYREMLHNATFCLVPRGRRLGSFRFLEALQAACVPVMLSNGWELPFSEVINWNQAAVIGDERLLLQIPSTIRSIHQDKILALRQQTQFLWEAYFSSVEKIVLTTLEIIQDRIFKHISRNSLIWNKHPGGLFVLPQYSSYLGDFPYYYANLGLKPPSKFTAVIHAVTPLVSQSQPVLKLLVAAAKSQYCAQIIVLWNCDKPLPAKHRWPATAVPVIVIEGESKVMSSRFLPYDNIITDAVLSLDEDTVLSTTEVDFAFTVWQSFPERIVGYPARSHFWDNSKERWGYTSKWTNDYSMVLTGAAIYHKYYHYLYSHYLPASLKNMVDQLANCEDILMNFLVSAVTKLPPIKVTQKKQYKETMMGQTSRASRWADPDHFAQRQSCMNTFASWFGYMPLIHSQMRLDPVLFKDQVSILRKKYRDIERL.

Residues 1 to 7 (MQAKKRY) lie on the Cytoplasmic side of the membrane. The chain crosses the membrane as a helical; Signal-anchor for type II membrane protein span at residues 8–28 (FILLSAGSCLALLFYFGGLQF). The Lumenal segment spans residues 29–746 (RASRSHSRRE…RKKYRDIERL (718 aa)). N-linked (GlcNAc...) asparagine glycosylation is present at N89. 2 disulfide bridges follow: C98-C103 and C109-C152. Residues L166 and Y203 each coordinate a protein. Positions 267, 269, 271, and 280 each coordinate UDP. An intrachain disulfide couples C298 to C312. H300 serves as a coordination point for a protein. UDP contacts are provided by Y319 and Y324. An N-linked (GlcNAc...) asparagine glycan is attached at N330. 2 disulfide bridges follow: C334–C355 and C652–C704. UDP is bound by residues R346 and E349.

It belongs to the glycosyltransferase 47 family. In terms of assembly, part of the heparan sulfate polymerase, a dimeric complex composed of EXT1 and EXT2. Could also form homooligomeric complexes. Interacts with NDST1. Post-translationally, N-glycosylated.

The protein resides in the golgi apparatus membrane. It is found in the golgi apparatus. The protein localises to the cis-Golgi network membrane. Its subcellular location is the endoplasmic reticulum membrane. The enzyme catalyses 3-O-{alpha-D-GlcNAc-[(1-&gt;4)-beta-D-GlcA-(1-&gt;4)-alpha-D-GlcNAc](n)-(1-&gt;4)-beta-D-GlcA-(1-&gt;3)-beta-D-Gal-(1-&gt;3)-beta-D-Gal-(1-&gt;4)-beta-D-Xyl}-L-seryl-[protein] + UDP-alpha-D-glucuronate = 3-O-{[(1-&gt;4)-beta-D-GlcA-(1-&gt;4)-alpha-D-GlcNAc](n+1)-(1-&gt;4)-beta-D-GlcA-(1-&gt;3)-beta-D-Gal-(1-&gt;3)-beta-D-Gal-(1-&gt;4)-beta-D-Xyl}-L-seryl-[protein] + UDP + H(+). It functions in the pathway protein modification; protein glycosylation. In terms of biological role, glycosyltransferase forming with EXT2 the heterodimeric heparan sulfate polymerase which catalyzes the elongation of the heparan sulfate glycan backbone. Glycan backbone extension consists in the alternating transfer of (1-&gt;4)-beta-D-GlcA and (1-&gt;4)-alpha-D-GlcNAc residues from their respective UDP-sugar donors. Both EXT1 and EXT2 are required for the full activity of the polymerase since EXT1 bears the N-acetylglucosaminyl-proteoglycan 4-beta-glucuronosyltransferase activity within the complex while EXT2 carries the glucuronosyl-N-acetylglucosaminyl-proteoglycan 4-alpha-N-acetylglucosaminyltransferase activity. Heparan sulfate proteoglycans are ubiquitous components of the extracellular matrix and play an important role in tissue homeostasis and signaling. The polypeptide is Exostosin-1 (EXT1) (Papio anubis (Olive baboon)).